The sequence spans 451 residues: V-type proton ATPase subunit S1 (451 aa).

The N-terminal stretch at methionine 1–alanine 16 is a signal peptide. Topologically, residues tyrosine 17–serine 407 are lumenal. N-linked (GlcNAc...) asparagine glycans are attached at residues asparagine 191, asparagine 235, asparagine 249, and asparagine 330. Residues tryptophan 408–leucine 428 traverse the membrane as a helical segment. Residues glutamine 429–glutamate 451 lie on the Cytoplasmic side of the membrane.

This sequence belongs to the vacuolar ATPase subunit S1 family. Accessory component of the multisubunit proton-transporting vacuolar (V)-ATPase protein pump. In terms of tissue distribution, expressed in pharynx, hypodermis, intestine, vulval hypodermis and the H-shape excretory cell.

It localises to the membrane. In terms of biological role, accessory subunit of the proton-transporting vacuolar (V)-ATPase protein pump, which is required for luminal acidification of secretory vesicles. In the germline, required for the trafficking of the receptor RME-2 to the oocyte cell membrane where it regulates the uptake of yolk proteins. Also, plays an essential role in osmoregulation in the embryo, probably by regulating the proper formation of the eggshell. The polypeptide is V-type proton ATPase subunit S1 (Caenorhabditis elegans).